Reading from the N-terminus, the 265-residue chain is Metallo-beta-lactamase VIM-7 (265 aa).

The N-terminal stretch at 1–17 is a signal peptide; the sequence is MFQIRSFLVGISAFVMA. Residues His113, His115, Asp117, His178, Cys197, and His239 each contribute to the Zn(2+) site.

Belongs to the metallo-beta-lactamase superfamily. Class-B beta-lactamase family. In terms of assembly, monomer. Requires Zn(2+) as cofactor.

The protein resides in the periplasm. The catalysed reaction is a beta-lactam + H2O = a substituted beta-amino acid. Class B beta-lactamase which confers resistance to the beta-lactam antibiotics, including penicillins, cephalosporins and carbapenems. Acts via hydrolysis of the beta-lactam ring. Has penicillin-, cephalosporin- and carbapenem-hydrolyzing activities. This Pseudomonas aeruginosa protein is Metallo-beta-lactamase VIM-7.